Here is a 943-residue protein sequence, read N- to C-terminus: 2-oxoglutarate dehydrogenase E1 component (943 aa).

This sequence belongs to the alpha-ketoglutarate dehydrogenase family. As to quaternary structure, homodimer. Part of the 2-oxoglutarate dehydrogenase (OGDH) complex composed of E1 (2-oxoglutarate dehydrogenase), E2 (dihydrolipoamide succinyltransferase) and E3 (dihydrolipoamide dehydrogenase); the complex contains multiple copies of the three enzymatic components (E1, E2 and E3). It depends on thiamine diphosphate as a cofactor.

It carries out the reaction N(6)-[(R)-lipoyl]-L-lysyl-[protein] + 2-oxoglutarate + H(+) = N(6)-[(R)-S(8)-succinyldihydrolipoyl]-L-lysyl-[protein] + CO2. In terms of biological role, E1 component of the 2-oxoglutarate dehydrogenase (OGDH) complex which catalyzes the decarboxylation of 2-oxoglutarate, the first step in the conversion of 2-oxoglutarate to succinyl-CoA and CO(2). This chain is 2-oxoglutarate dehydrogenase E1 component, found in Shouchella clausii (strain KSM-K16) (Alkalihalobacillus clausii).